Consider the following 326-residue polypeptide: Biotin synthase (326 aa).

One can recognise a Radical SAM core domain in the interval 50–279 (FNGEKVDVEQ…ESVIKISGGR (230 aa)). [4Fe-4S] cluster-binding residues include C68, C72, and C75. [2Fe-2S] cluster contacts are provided by C112, C145, C204, and K274.

The protein belongs to the radical SAM superfamily. Biotin synthase family. As to quaternary structure, homodimer. Requires [4Fe-4S] cluster as cofactor. [2Fe-2S] cluster serves as cofactor.

It carries out the reaction (4R,5S)-dethiobiotin + (sulfur carrier)-SH + 2 reduced [2Fe-2S]-[ferredoxin] + 2 S-adenosyl-L-methionine = (sulfur carrier)-H + biotin + 2 5'-deoxyadenosine + 2 L-methionine + 2 oxidized [2Fe-2S]-[ferredoxin]. The protein operates within cofactor biosynthesis; biotin biosynthesis; biotin from 7,8-diaminononanoate: step 2/2. In terms of biological role, catalyzes the conversion of dethiobiotin (DTB) to biotin by the insertion of a sulfur atom into dethiobiotin via a radical-based mechanism. In Nitrosopumilus maritimus (strain SCM1), this protein is Biotin synthase.